The sequence spans 513 residues: 2-isopropylmalate synthase (513 aa).

The Pyruvate carboxyltransferase domain occupies 5–267 (LVIFDTTLRD…ETRIDTTQIV (263 aa)). Positions 14, 202, 204, and 238 each coordinate Mn(2+). Positions 393–513 (KLVYSRVCSE…LDKVKAQGGV (121 aa)) are regulatory domain.

It belongs to the alpha-IPM synthase/homocitrate synthase family. LeuA type 1 subfamily. As to quaternary structure, homodimer. It depends on Mn(2+) as a cofactor.

It is found in the cytoplasm. The catalysed reaction is 3-methyl-2-oxobutanoate + acetyl-CoA + H2O = (2S)-2-isopropylmalate + CoA + H(+). Its pathway is amino-acid biosynthesis; L-leucine biosynthesis; L-leucine from 3-methyl-2-oxobutanoate: step 1/4. Its function is as follows. Catalyzes the condensation of the acetyl group of acetyl-CoA with 3-methyl-2-oxobutanoate (2-ketoisovalerate) to form 3-carboxy-3-hydroxy-4-methylpentanoate (2-isopropylmalate). This chain is 2-isopropylmalate synthase, found in Dechloromonas aromatica (strain RCB).